Consider the following 331-residue polypeptide: Ketol-acid reductoisomerase (NADP(+)) (331 aa).

Residues 2 to 182 (AKLFYDSDAD…GGTRAGILET (181 aa)) form the KARI N-terminal Rossmann domain. NADP(+) is bound by residues 25–28 (YGSQ), serine 51, serine 53, and 83–86 (DEFQ). Residue histidine 108 is part of the active site. Glycine 134 is an NADP(+) binding site. The region spanning 183 to 328 (NFKEETETDL…KTLRSMFSWL (146 aa)) is the KARI C-terminal knotted domain. Aspartate 191, glutamate 195, glutamate 227, and glutamate 231 together coordinate Mg(2+). Residue serine 252 participates in substrate binding.

It belongs to the ketol-acid reductoisomerase family. Requires Mg(2+) as cofactor.

It catalyses the reaction (2R)-2,3-dihydroxy-3-methylbutanoate + NADP(+) = (2S)-2-acetolactate + NADPH + H(+). The enzyme catalyses (2R,3R)-2,3-dihydroxy-3-methylpentanoate + NADP(+) = (S)-2-ethyl-2-hydroxy-3-oxobutanoate + NADPH + H(+). The protein operates within amino-acid biosynthesis; L-isoleucine biosynthesis; L-isoleucine from 2-oxobutanoate: step 2/4. It participates in amino-acid biosynthesis; L-valine biosynthesis; L-valine from pyruvate: step 2/4. Functionally, involved in the biosynthesis of branched-chain amino acids (BCAA). Catalyzes an alkyl-migration followed by a ketol-acid reduction of (S)-2-acetolactate (S2AL) to yield (R)-2,3-dihydroxy-isovalerate. In the isomerase reaction, S2AL is rearranged via a Mg-dependent methyl migration to produce 3-hydroxy-3-methyl-2-ketobutyrate (HMKB). In the reductase reaction, this 2-ketoacid undergoes a metal-dependent reduction by NADPH to yield (R)-2,3-dihydroxy-isovalerate. This chain is Ketol-acid reductoisomerase (NADP(+)), found in Prochlorococcus marinus (strain NATL1A).